A 97-amino-acid polypeptide reads, in one-letter code: Co-chaperonin GroES (97 aa).

Belongs to the GroES chaperonin family. Heptamer of 7 subunits arranged in a ring. Interacts with the chaperonin GroEL.

The protein localises to the cytoplasm. Its function is as follows. Together with the chaperonin GroEL, plays an essential role in assisting protein folding. The GroEL-GroES system forms a nano-cage that allows encapsulation of the non-native substrate proteins and provides a physical environment optimized to promote and accelerate protein folding. GroES binds to the apical surface of the GroEL ring, thereby capping the opening of the GroEL channel. This Pseudomonas fluorescens (strain ATCC BAA-477 / NRRL B-23932 / Pf-5) protein is Co-chaperonin GroES.